We begin with the raw amino-acid sequence, 688 residues long: Polyphosphate kinase (688 aa).

Asparagine 45 is a binding site for ATP. The Mg(2+) site is built by arginine 375 and arginine 405. The PLD phosphodiesterase domain occupies 430-464 (PGLKIHAKLFLISRKEGDDVVRYAHIGTGNFNEKT). Histidine 435 acts as the Phosphohistidine intermediate in catalysis. 3 residues coordinate ATP: tyrosine 468, arginine 564, and histidine 592.

It belongs to the polyphosphate kinase 1 (PPK1) family. Requires Mg(2+) as cofactor. Post-translationally, an intermediate of this reaction is the autophosphorylated ppk in which a phosphate is covalently linked to a histidine residue through a N-P bond.

The catalysed reaction is [phosphate](n) + ATP = [phosphate](n+1) + ADP. Catalyzes the reversible transfer of the terminal phosphate of ATP to form a long-chain polyphosphate (polyP). The sequence is that of Polyphosphate kinase from Salmonella typhimurium (strain LT2 / SGSC1412 / ATCC 700720).